The following is a 424-amino-acid chain: 3-phosphoshikimate 1-carboxyvinyltransferase (424 aa).

The 3-phosphoshikimate site is built by Lys21, Ser22, and Arg26. Phosphoenolpyruvate is bound at residue Lys21. 2 residues coordinate phosphoenolpyruvate: Gly92 and Arg120. 3-phosphoshikimate-binding residues include Ser163, Ser164, Gln165, Ser191, Asp306, and Lys333. Gln165 is a phosphoenolpyruvate binding site. Asp306 (proton acceptor) is an active-site residue. 3 residues coordinate phosphoenolpyruvate: Arg337, Arg379, and Lys405.

The protein belongs to the EPSP synthase family. Monomer.

It is found in the cytoplasm. It catalyses the reaction 3-phosphoshikimate + phosphoenolpyruvate = 5-O-(1-carboxyvinyl)-3-phosphoshikimate + phosphate. Its pathway is metabolic intermediate biosynthesis; chorismate biosynthesis; chorismate from D-erythrose 4-phosphate and phosphoenolpyruvate: step 6/7. Functionally, catalyzes the transfer of the enolpyruvyl moiety of phosphoenolpyruvate (PEP) to the 5-hydroxyl of shikimate-3-phosphate (S3P) to produce enolpyruvyl shikimate-3-phosphate and inorganic phosphate. This chain is 3-phosphoshikimate 1-carboxyvinyltransferase, found in Clostridium perfringens (strain ATCC 13124 / DSM 756 / JCM 1290 / NCIMB 6125 / NCTC 8237 / Type A).